Reading from the N-terminus, the 246-residue chain is Probable cytokinin riboside 5'-monophosphate phosphoribohydrolase LOGL5 (246 aa).

Over residues 1–10 (MMMENSREQQ) the composition is skewed to basic and acidic residues. Residues 1-28 (MMMENSREQQPESSPANNNSKKKKKKKT) form a disordered region. Substrate-binding positions include Glu-103, 121 to 122 (RK), 138 to 144 (GYGTLEE), and Thr-150.

The protein belongs to the LOG family. Expressed in roots and leaves.

It carries out the reaction N(6)-(dimethylallyl)adenosine 5'-phosphate + H2O = N(6)-dimethylallyladenine + D-ribose 5-phosphate. It catalyses the reaction 9-ribosyl-trans-zeatin 5'-phosphate + H2O = trans-zeatin + D-ribose 5-phosphate. Cytokinin-activating enzyme working in the direct activation pathway. Phosphoribohydrolase that converts inactive cytokinin nucleotides to the biologically active free-base forms. The polypeptide is Probable cytokinin riboside 5'-monophosphate phosphoribohydrolase LOGL5 (LOGL5) (Oryza sativa subsp. japonica (Rice)).